The following is a 51-amino-acid chain: Large ribosomal subunit protein eL39z/eL39x (51 aa).

Residues 1-21 (MPSHKSFMIKKKLGKKMRQNR) are disordered. Positions 7–19 (FMIKKKLGKKMRQ) are enriched in basic residues.

The protein belongs to the eukaryotic ribosomal protein eL39 family.

In Arabidopsis thaliana (Mouse-ear cress), this protein is Large ribosomal subunit protein eL39z/eL39x (RPL39A).